The chain runs to 858 residues: DNA mismatch repair protein MutS (858 aa).

Residue 602–609 (GPNMSGKS) coordinates ATP.

It belongs to the DNA mismatch repair MutS family.

This protein is involved in the repair of mismatches in DNA. It is possible that it carries out the mismatch recognition step. This protein has a weak ATPase activity. Overexpression of mutSL partially suppresses the high spontaneous mutation frequency of a ytkD/mutM/mutY triple disruption which lacks the system required to prevent damage by oxidized guanine (8-oxo-dGTP). This suggests that MutSL also functions to repair mismatches due to oxidative stress in both growing and stationary phase cells. The polypeptide is DNA mismatch repair protein MutS (Bacillus subtilis (strain 168)).